A 428-amino-acid polypeptide reads, in one-letter code: Flap endonuclease 1-B (428 aa).

The tract at residues 1–132 (MGIKGLTKVL…KELAKRSLKR (132 aa)) is N-domain. A Mg(2+)-binding site is contributed by aspartate 34. Arginine 98 is a DNA binding site. Mg(2+)-binding residues include aspartate 114, glutamate 186, glutamate 188, aspartate 207, and aspartate 209. Positions 150–281 (AVEKFSKRTV…QRALKLIRQH (132 aa)) are I-domain. Glutamate 186 contacts DNA. Residues glycine 259 and aspartate 261 each contribute to the DNA site. Aspartate 261 provides a ligand contact to Mg(2+).

The protein belongs to the XPG/RAD2 endonuclease family. FEN1 subfamily. In terms of assembly, interacts with PCNA. Three molecules of FEN1 bind to one PCNA trimer with each molecule binding to one PCNA monomer. PCNA stimulates the nuclease activity without altering cleavage specificity. Mg(2+) serves as cofactor. In terms of processing, phosphorylated. Phosphorylation upon DNA damage induces relocalization to the nuclear plasma.

It is found in the nucleus. Its subcellular location is the nucleolus. It localises to the nucleoplasm. The protein resides in the mitochondrion. In terms of biological role, structure-specific nuclease with 5'-flap endonuclease and 5'-3' exonuclease activities involved in DNA replication and repair. During DNA replication, cleaves the 5'-overhanging flap structure that is generated by displacement synthesis when DNA polymerase encounters the 5'-end of a downstream Okazaki fragment. It enters the flap from the 5'-end and then tracks to cleave the flap base, leaving a nick for ligation. Also involved in the long patch base excision repair (LP-BER) pathway, by cleaving within the apurinic/apyrimidinic (AP) site-terminated flap. Acts as a genome stabilization factor that prevents flaps from equilibrating into structures that lead to duplications and deletions. Also possesses 5'-3' exonuclease activity on nicked or gapped double-stranded DNA, and exhibits RNase H activity. Also involved in replication and repair of rDNA and in repairing mitochondrial DNA. This chain is Flap endonuclease 1-B, found in Sorghum bicolor (Sorghum).